A 962-amino-acid chain; its full sequence is Glycine dehydrogenase (decarboxylating) (962 aa).

N6-(pyridoxal phosphate)lysine is present on Lys-709.

Belongs to the GcvP family. As to quaternary structure, the glycine cleavage system is composed of four proteins: P, T, L and H. Pyridoxal 5'-phosphate is required as a cofactor.

The enzyme catalyses N(6)-[(R)-lipoyl]-L-lysyl-[glycine-cleavage complex H protein] + glycine + H(+) = N(6)-[(R)-S(8)-aminomethyldihydrolipoyl]-L-lysyl-[glycine-cleavage complex H protein] + CO2. Its function is as follows. The glycine cleavage system catalyzes the degradation of glycine. The P protein binds the alpha-amino group of glycine through its pyridoxal phosphate cofactor; CO(2) is released and the remaining methylamine moiety is then transferred to the lipoamide cofactor of the H protein. In Shewanella amazonensis (strain ATCC BAA-1098 / SB2B), this protein is Glycine dehydrogenase (decarboxylating).